We begin with the raw amino-acid sequence, 567 residues long: GBF-interacting protein 1 (567 aa).

3 disordered regions span residues 70-150 (ERKK…PSGI), 164-192 (DKVD…SKES), and 545-567 (PIGP…GNNY). Polar residues-rich tracts occupy residues 91 to 102 (FASSYTDASNGR) and 121 to 136 (TASS…TKPS). Positions 182-191 (DVVEPDKSKE) are enriched in basic and acidic residues. Residues 550 to 567 (HVTNQQPQAARTNLGNNY) are compositionally biased toward polar residues.

The protein belongs to the GIP1 family. As to quaternary structure, monomer, homodimer, homooligomer. Under non-reducing conditions, predominantly present in high molecular weight forms, but predominates in low molecular weight monomers under reducing conditions. Interacts with BZIP16, BZIP68 and GBF1. Interacts with LBD18. As to expression, expressed in roots, leaves, stems and flowers.

It is found in the nucleus. Plant specific protein that enhances G-box-binding factor (GBF) DNA binding activity. May function as a nuclear chaperone or lever and regulate the multimeric state of GBFs. May contribute to bZIP-mediated gene regulation. Is able to refold denatured rhodanese in vitro. Reduces DNA-binding activity of BZIP16, BZIP68 and GBF1 under non-reducing conditions through direct physical interaction. Acts as a negative co-regulator in red and blue light-mediated hypocotyl elongation. Functions to promote hypocotyl elongation during the early stages of seedling development by regulating the repression effect by BZIP16 and the activation effect by BZIP68 and GBF1 on LHCB2.4 expression. Enhances transcriptional activity of LBD18 in the EXP14 promoter. May act as a transcriptional coactivator of LBD18. In Arabidopsis thaliana (Mouse-ear cress), this protein is GBF-interacting protein 1.